Reading from the N-terminus, the 204-residue chain is Thymidine kinase (204 aa).

ATP is bound by residues 18–25 and 91–94; these read GSMFSGKT and DEGQ. Glu-92 functions as the Proton acceptor in the catalytic mechanism. Residues Cys-148, Cys-151, Cys-180, and His-183 each coordinate Zn(2+).

The protein belongs to the thymidine kinase family. In terms of assembly, homotetramer.

It is found in the cytoplasm. The catalysed reaction is thymidine + ATP = dTMP + ADP + H(+). The chain is Thymidine kinase from Bdellovibrio bacteriovorus (strain ATCC 15356 / DSM 50701 / NCIMB 9529 / HD100).